An 847-amino-acid polypeptide reads, in one-letter code: Zinc transporter ZIP10 (847 aa).

A signal peptide spans 1–26 (MMRVHTHTRLCFLCVLTLLYHQCSHC). The disordered stretch occupies residues 136–374 (GRHSHSAGHP…RREVPGSPAH (239 aa)). Residues 162 to 171 (HHENEEHTLA) show a composition bias toward basic and acidic residues. A compositionally biased stretch (polar residues) spans 179-188 (TLGTGATPPS). A compositionally biased stretch (basic and acidic residues) spans 190–269 (SEEHDHDHEH…QEHNDLSDQN (80 aa)). Basic residues-rich tracts occupy residues 270-285 (HHHHDHHHHKHPHPHL) and 314-330 (TRRHRRPSKVKAHRGRN). Residue Asn385 is glycosylated (N-linked (GlcNAc...) asparagine). A run of 3 helical transmembrane segments spans residues 447-467 (FVSITIISLLSLLGVVLVPIL), 474-494 (FLLTFLVALAVGTLSGDALLH), and 529-549 (GLTALAGIYLLFIIEHCIGMF). A disordered region spans residues 613-676 (ELQPLDSPSK…HSHHGHCHSD (64 aa)). Basic and acidic residues predominate over residues 629-646 (DSDHPYEAPVKTEEDNVP). Residues 648 to 672 (AKSKKHGHGHGHGHGHGHGHSHHGH) show a composition bias toward basic residues. The next 4 membrane-spanning stretches (helical) occupy residues 705–725 (AIGAAFSANITGGISTSVAVF), 750–770 (IVYNLLSALMAYAGMVIGTAV), 779–799 (SWIFAVTAGMFLYVALVDMLP), and 817–837 (FVLQNFGMLTGFGIMLLIAIF).

This sequence belongs to the ZIP transporter (TC 2.A.5) family. In terms of processing, undergoes N-terminal ectodomain shedding.

Its subcellular location is the cell membrane. The protein localises to the apical cell membrane. The catalysed reaction is Zn(2+)(in) = Zn(2+)(out). Zinc-influx transporter. When associated with slc39a6, the heterodimer slc39a10/slc39a6 has a functional role in epithelial-mesenchymal transition (EMT) during embryonic development. Slc39a10/slc39a6 heterodimers play also an essentiel role in initiating mitosis by importing zinc into cells to initiate a pathway resulting in the onset of mitosis. When associated with slc39a6, the heterodimer controls Ncam1 phosphorylation and integration into focal adhesion complexes during EMT. In Danio rerio (Zebrafish), this protein is Zinc transporter ZIP10.